The sequence spans 328 residues: Putative potassium channel protein YugO (328 aa).

The next 3 membrane-spanning stretches (helical) occupy residues 19-39 (IGVI…ILEP), 42-62 (FTSV…VGYG), and 73-93 (AAGI…FATL). The 125-residue stretch at 114 to 238 (RDHIILIGWN…ERAGANQIIG (125 aa)) folds into the RCK N-terminal domain.

It is found in the cell membrane. The polypeptide is Putative potassium channel protein YugO (yugO) (Bacillus subtilis (strain 168)).